Here is a 257-residue protein sequence, read N- to C-terminus: Hydroxyacylglutathione hydrolase (257 aa).

Residues His-54, His-56, Asp-58, His-59, His-113, Asp-137, and His-175 each contribute to the Zn(2+) site.

Belongs to the metallo-beta-lactamase superfamily. Glyoxalase II family. Monomer. It depends on Zn(2+) as a cofactor.

The enzyme catalyses an S-(2-hydroxyacyl)glutathione + H2O = a 2-hydroxy carboxylate + glutathione + H(+). It functions in the pathway secondary metabolite metabolism; methylglyoxal degradation; (R)-lactate from methylglyoxal: step 2/2. Its function is as follows. Thiolesterase that catalyzes the hydrolysis of S-D-lactoyl-glutathione to form glutathione and D-lactic acid. This Synechocystis sp. (strain ATCC 27184 / PCC 6803 / Kazusa) protein is Hydroxyacylglutathione hydrolase.